Consider the following 597-residue polypeptide: UvrABC system protein C (597 aa).

One can recognise a GIY-YIG domain in the interval 15–93 (DNPGVYQYYD…IKTLQPRYNV (79 aa)). Positions 207-242 (KESLKDFKKLMNNYAQNLQFEEAQKIKEKIEVLENY) constitute a UVR domain.

The protein belongs to the UvrC family. As to quaternary structure, interacts with UvrB in an incision complex.

It localises to the cytoplasm. In terms of biological role, the UvrABC repair system catalyzes the recognition and processing of DNA lesions. UvrC both incises the 5' and 3' sides of the lesion. The N-terminal half is responsible for the 3' incision and the C-terminal half is responsible for the 5' incision. This Flavobacterium johnsoniae (strain ATCC 17061 / DSM 2064 / JCM 8514 / BCRC 14874 / CCUG 350202 / NBRC 14942 / NCIMB 11054 / UW101) (Cytophaga johnsonae) protein is UvrABC system protein C.